We begin with the raw amino-acid sequence, 258 residues long: UPF0246 protein Pnec_1068 (258 aa).

It belongs to the UPF0246 family.

This is UPF0246 protein Pnec_1068 from Polynucleobacter necessarius subsp. necessarius (strain STIR1).